An 866-amino-acid chain; its full sequence is Thiamine diphosphate dependent-3-acetyloctanal synthase PigD (866 aa).

Positions 826 to 866 are disordered; sequence KGWQRDPSDREALQERKDWAARQPESTSTSFDQGQNKEAIS. Basic and acidic residues predominate over residues 828–845; it reads WQRDPSDREALQERKDWA. Positions 849 to 866 are enriched in polar residues; the sequence is PESTSTSFDQGQNKEAIS.

The protein belongs to the TPP enzyme family. It depends on thiamine diphosphate as a cofactor.

The enzyme catalyses (2E)-octenal + pyruvate + H(+) = (S)-3-acetyloctanal + CO2. It participates in antibiotic biosynthesis; prodigiosin biosynthesis. Its function is as follows. Involved in the biosynthesis of 2-methyl-3-n-amyl-pyrrole (MAP), one of the terminal products involved in the biosynthesis of the red antibiotic prodigiosin (Pig). Catalyzes the decarboxylation of pyruvate, followed by the modification of the resulting two-carbon fragment acetaldehyde at the C3 position of the 2-octenal (1,2-addition of acetaldehyde) giving 3-acetyloctanal. This Serratia sp. (strain ATCC 39006) (Prodigiosinella confusarubida) protein is Thiamine diphosphate dependent-3-acetyloctanal synthase PigD.